Consider the following 250-residue polypeptide: Triosephosphate isomerase (250 aa).

Substrate is bound by residues Asn-10 and Lys-12. His-94 serves as the catalytic Electrophile. Glu-167 functions as the Proton acceptor in the catalytic mechanism.

It belongs to the triosephosphate isomerase family. Homodimer.

The protein localises to the cytoplasm. The catalysed reaction is D-glyceraldehyde 3-phosphate = dihydroxyacetone phosphate. Its pathway is carbohydrate biosynthesis; gluconeogenesis. The protein operates within carbohydrate degradation; glycolysis; D-glyceraldehyde 3-phosphate from glycerone phosphate: step 1/1. The sequence is that of Triosephosphate isomerase from Taenia solium (Pork tapeworm).